A 231-amino-acid polypeptide reads, in one-letter code: 2-hydroxy-3-keto-5-methylthiopentenyl-1-phosphate phosphatase (231 aa).

Belongs to the HAD-like hydrolase superfamily. MtnX family.

The catalysed reaction is 2-hydroxy-5-methylsulfanyl-3-oxopent-1-enyl phosphate + H2O = 1,2-dihydroxy-5-(methylsulfanyl)pent-1-en-3-one + phosphate. It functions in the pathway amino-acid biosynthesis; L-methionine biosynthesis via salvage pathway; L-methionine from S-methyl-5-thio-alpha-D-ribose 1-phosphate: step 4/6. Dephosphorylates 2-hydroxy-3-keto-5-methylthiopentenyl-1-phosphate (HK-MTPenyl-1-P) yielding 1,2-dihydroxy-3-keto-5-methylthiopentene (DHK-MTPene). In Bacillus pumilus (strain SAFR-032), this protein is 2-hydroxy-3-keto-5-methylthiopentenyl-1-phosphate phosphatase.